We begin with the raw amino-acid sequence, 37 residues long: HSQGMFTNDYSKYLEEKRAKEFVEWLKNGESKRQGMS.

This sequence belongs to the glucagon family.

It is found in the secreted. Its function is as follows. Glucagon plays a key role in glucose metabolism and homeostasis. Regulates blood glucose by increasing gluconeogenesis and decreasing glycolysis. This Huso dauricus (Kaluga sturgeon) protein is Glucagon-1.